A 99-amino-acid polypeptide reads, in one-letter code: Secreted RxLR effector protein 94 (99 aa).

The RxLR-dEER signature appears at Arg-35–Arg-55.

Belongs to the RxLR effector family.

It is found in the secreted. The protein resides in the host nucleus. Its subcellular location is the host cytoplasm. In terms of biological role, secreted effector that completely suppresses the host cell death induced by cell death-inducing proteins. In Plasmopara viticola (Downy mildew of grapevine), this protein is Secreted RxLR effector protein 94.